Here is a 420-residue protein sequence, read N- to C-terminus: Dynein axonemal assembly factor 4 (420 aa).

In terms of domain architecture, CS spans 3–87; the sequence is VRVSEFSWQQ…KEPVLWDSLS (85 aa). The interval 7–103 is mediates interaction with ESR1 and STUB1; that stretch reads EFSWQQTPAT…EMMQRIREKS (97 aa). Over residues 164–192 the composition is skewed to basic and acidic residues; sequence ECQKKADGQKRVQRKEKPLEGKQAEETKA. The tract at residues 164–212 is disordered; the sequence is ECQKKADGQKRVQRKEKPLEGKQAEETKALKPRGLPRKAPPTRLPTRGR. TPR repeat units lie at residues 288–321, 322–355, and 364–397; these read PDWL…NCKI, PLLY…LTPP, and MKAH…DPAN.

As to quaternary structure, interacts with ZMYND10. Interacts with ESR1 and ESR2. Interacts with STUB1. Interacts with DNAAF2. Interacts with CCT3, CCT4, CCT5 and CCT8. Interacts with DNAAF6/PIH1D3.

It localises to the nucleus. The protein localises to the cytoplasm. Its subcellular location is the dynein axonemal particle. The protein resides in the cell projection. It is found in the neuron projection. Functionally, involved in neuronal migration during development of the cerebral neocortex. May regulate the stability and proteasomal degradation of the estrogen receptors that play an important role in neuronal differentiation, survival and plasticity. Axonemal dynein assembly factor required for ciliary motility. This is Dynein axonemal assembly factor 4 from Mus musculus (Mouse).